The following is a 362-amino-acid chain: 3-dehydroquinate synthase (362 aa).

Residues 74 to 79, 108 to 112, 132 to 133, lysine 145, and lysine 154 each bind NAD(+); these read DGEEHK, GVTGD, and TT. Zn(2+) contacts are provided by glutamate 187, histidine 250, and histidine 267.

The protein belongs to the sugar phosphate cyclases superfamily. Dehydroquinate synthase family. Co(2+) is required as a cofactor. It depends on Zn(2+) as a cofactor. The cofactor is NAD(+).

The protein resides in the cytoplasm. The enzyme catalyses 7-phospho-2-dehydro-3-deoxy-D-arabino-heptonate = 3-dehydroquinate + phosphate. The protein operates within metabolic intermediate biosynthesis; chorismate biosynthesis; chorismate from D-erythrose 4-phosphate and phosphoenolpyruvate: step 2/7. Functionally, catalyzes the conversion of 3-deoxy-D-arabino-heptulosonate 7-phosphate (DAHP) to dehydroquinate (DHQ). This is 3-dehydroquinate synthase from Syntrophotalea carbinolica (strain DSM 2380 / NBRC 103641 / GraBd1) (Pelobacter carbinolicus).